The chain runs to 462 residues: MEEDRRQTDLGTAADIEEAQLAQASPSPAIENETESAAQTQNGATPLKQPKKRFVGRRAATEAAAKNGSSGATGESGAVATAKPRRAPRLLNQVPKEILENPDLKAAISLLPANYNFEIPKTIHRIQTSGSKRVALQMPEGLLLFATTISDILTQFCPGIETLIMGDVTYGACCIDDYTARALGCDLLVHYAHSCLIPVDVTTIKTLYVFVDISIDATHLLASLEHNFASGKTIAVVGTIQFNATIHGVKSSLERGGFRVLVPQIAPLSKGEILGCTSPRLTEDDKIDLILYLGDGRFHLESIMIHNPTIPAYRYDPYSRKLTRETYGHEEMQSLRRTAIHSARSARKWGLILGALGRQGNPHTLGLIEKELKARGIPIVHLLLSEIFPGKLALMSDIECWVQVACPRLSIDWGYAFSRPLLTPYEALVALGEKKDWGDGVYPMDYYGKDGLGRTRPLQIAS.

Positions 1–87 are disordered; that stretch reads MEEDRRQTDL…AVATAKPRRA (87 aa). Residues 35–44 show a composition bias toward polar residues; that stretch reads ESAAQTQNGA. [4Fe-4S] cluster-binding residues include cysteine 173, cysteine 276, and cysteine 406.

It belongs to the DPH1/DPH2 family. DPH1 subfamily. As to quaternary structure, component of the 2-(3-amino-3-carboxypropyl)histidine synthase complex composed of DPH1, DPH2, DPH3 and a NADH-dependent reductase, predominantly CBR1. [4Fe-4S] cluster serves as cofactor.

The protein localises to the cytoplasm. The catalysed reaction is L-histidyl-[translation elongation factor 2] + S-adenosyl-L-methionine = 2-[(3S)-amino-3-carboxypropyl]-L-histidyl-[translation elongation factor 2] + S-methyl-5'-thioadenosine + H(+). It functions in the pathway protein modification; peptidyl-diphthamide biosynthesis. Catalyzes the first step of diphthamide biosynthesis, a post-translational modification of histidine which occurs in elongation factor 2. DPH1 and DPH2 transfer a 3-amino-3-carboxypropyl (ACP) group from S-adenosyl-L-methionine (SAM) to a histidine residue, the reaction is assisted by a reduction system comprising DPH3 and a NADH-dependent reductase, predominantly CBR1. The protein is 2-(3-amino-3-carboxypropyl)histidine synthase subunit 1 (DPH1) of Gibberella zeae (strain ATCC MYA-4620 / CBS 123657 / FGSC 9075 / NRRL 31084 / PH-1) (Wheat head blight fungus).